Consider the following 32-residue polypeptide: ilv operon leader peptide (32 aa).

The chain is ilv operon leader peptide (ilvL) from Edwardsiella tarda.